Reading from the N-terminus, the 313-residue chain is Protoheme IX farnesyltransferase (313 aa).

The next 8 membrane-spanning stretches (helical) occupy residues 34–54, 56–76, 105–125, 128–148, 152–172, 173–193, 237–257, and 291–311; these read VIEL…RGTV, PLLI…ANTL, HALI…WSTT, LSAH…TLLL, TSQN…IGWS, AVTG…FFWT, VLAT…VAIL, and YLAV…PTLL.

This sequence belongs to the UbiA prenyltransferase family. Protoheme IX farnesyltransferase subfamily.

The protein resides in the cell membrane. It catalyses the reaction heme b + (2E,6E)-farnesyl diphosphate + H2O = Fe(II)-heme o + diphosphate. Its pathway is porphyrin-containing compound metabolism; heme O biosynthesis; heme O from protoheme: step 1/1. Converts heme B (protoheme IX) to heme O by substitution of the vinyl group on carbon 2 of heme B porphyrin ring with a hydroxyethyl farnesyl side group. The protein is Protoheme IX farnesyltransferase of Mycolicibacterium gilvum (strain PYR-GCK) (Mycobacterium gilvum (strain PYR-GCK)).